We begin with the raw amino-acid sequence, 320 residues long: Metapyrocatechase 2 (320 aa).

Disordered regions lie at residues 1 to 21 (MDTH…RPRH) and 131 to 153 (GPKT…GQRG). 2 consecutive VOC domains span residues 25-131 (SIDH…VKIG) and 167-282 (RLSH…YSAD). Residues H170, H227, and E278 each coordinate Fe cation.

The protein belongs to the extradiol ring-cleavage dioxygenase family. The cofactor is Fe(2+).

The catalysed reaction is catechol + O2 = (2Z,4E)-2-hydroxy-6-oxohexa-2,4-dienoate + H(+). This is Metapyrocatechase 2 (mcpII) from Cupriavidus necator (Alcaligenes eutrophus).